We begin with the raw amino-acid sequence, 361 residues long: G-protein coupled receptor 52 (361 aa).

The Extracellular portion of the chain corresponds to Met1–Thr44. N-linked (GlcNAc...) asparagine glycosylation is found at Asn2, Asn13, and Asn20. A helical membrane pass occupies residues Ile45–Phe65. At His66–Asp87 the chain is on the cytoplasmic side. A helical membrane pass occupies residues Leu88 to Ile108. The Extracellular portion of the chain corresponds to His109–Gln115. Residues Cys114 and Cys193 are joined by a disulfide bond. A helical transmembrane segment spans residues Val116–Ser136. Topologically, residues Val137–Arg159 are cytoplasmic. The helical transmembrane segment at Ile160–Trp180 threads the bilayer. The Extracellular segment spans residues Gly181–Ser200. Residues Ala201 to Phe221 form a helical membrane-spanning segment. The Cytoplasmic segment spans residues Thr222–Met265. A helical membrane pass occupies residues Val266 to Leu286. Over Leu287–Pro296 the chain is Extracellular. A helical transmembrane segment spans residues Thr297–Tyr317. At Ser318 to Ile361 the chain is on the cytoplasmic side.

This sequence belongs to the G-protein coupled receptor 1 family.

It localises to the cell membrane. Its function is as follows. G- protein coupled receptor activated by antipsychotics reserpine leading to an increase in intracellular cAMP and its internalization. May play a role in locomotor activity through modulation of dopamine, NMDA and ADORA2A-induced locomotor activity. These behavioral changes are accompanied by modulation of the dopamine receptor signaling pathway in striatum. Modulates HTT level via cAMP-dependent but PKA independent mechanisms throught activation of RAB39B that translocates HTT to the endoplasmic reticulum, thus avoiding proteasome degradation. In Bos taurus (Bovine), this protein is G-protein coupled receptor 52.